The sequence spans 141 residues: HTH-type transcriptional repressor NsrR (141 aa).

An HTH rrf2-type domain is found at 2-129; that stretch reads QLTSFTDYAL…DDCSIAELLD (128 aa). The H-T-H motif DNA-binding region spans 28-51; the sequence is ITDVTELFGVSRNHMVKVINRLGQ. Cys91, Cys96, and Cys102 together coordinate [2Fe-2S] cluster.

[2Fe-2S] cluster serves as cofactor.

Nitric oxide-sensitive repressor of genes involved in protecting the cell against nitrosative stress. May require iron for activity. The chain is HTH-type transcriptional repressor NsrR from Vibrio vulnificus (strain CMCP6).